The following is a 142-amino-acid chain: MRNHDLSPLLRQWIGFDKLANALQSTAEHQAFPPYNIEKSDDNHYRITLALAGFRQDDLDIQLEGTRLTVKGTPEKPETETKWLHQGLVIQPFSLSFTLADHMEVTGATFTNGLLHIDLTRNVPEALAPQRIAISDRPALNS.

Residues 26-137 (TAEHQAFPPY…APQRIAISDR (112 aa)) enclose the sHSP domain.

The protein belongs to the small heat shock protein (HSP20) family. Homodimer. Forms homomultimers of about 100-150 subunits at optimal growth temperatures. Conformation changes to oligomers at high temperatures or high ionic concentrations. The decrease in size of the multimers is accompanied by an increase in chaperone activity.

It is found in the cytoplasm. In terms of biological role, associates with aggregated proteins, together with IbpA, to stabilize and protect them from irreversible denaturation and extensive proteolysis during heat shock and oxidative stress. Aggregated proteins bound to the IbpAB complex are more efficiently refolded and reactivated by the ATP-dependent chaperone systems ClpB and DnaK/DnaJ/GrpE. Its activity is ATP-independent. The sequence is that of Small heat shock protein IbpB from Enterobacter sp. (strain 638).